A 431-amino-acid chain; its full sequence is MASTGVSVIVVGLGLAGLTTAIECHQKGHSVIALERSKDLNYVGKIIDDTVMIDNNAGVIVSKWGNGAVGQALNAWKFNNTQASVYDTTGKQVQTIEVRKPSSNKYLILRRELTKIVYDHAKTLGIDMRFGTEISDYWEESDQAGVSANGQKLQADCIIWADGVNSKGRDSVAGSSLKPTHSGYAHIRGRADIASLKGNPDAQWILQGAGEVDQMIFVPGPTACLTIVTCGGGRNVAFSNMYKVESPNSAKTSSTPATAQDFLKPIQSWPFKANIEAVVQAAPSGSLVDEPVLQLGQLPSWVSPQGRMILIGDASHPSALNSPIGESLVIEDAAVVAICLELAGKGNVPLALRVAEKIRYVKQSNNNKNIPRASALQHNVEQPDQGINMYPEVPLRDWVSEHNSQEHAYEEYDKVVKAIRGGKEYVATNIS.

A signal peptide spans 1-21 (MASTGVSVIVVGLGLAGLTTA). FAD contacts are provided by Glu35 and Arg110. Residue Arg188 is part of the active site. Asp313 serves as a coordination point for FAD.

The protein belongs to the paxM FAD-dependent monooxygenase family. FAD is required as a cofactor.

It functions in the pathway secondary metabolite biosynthesis. Its function is as follows. FAD-dependent monooxygenase; part of the gene cluster that mediates the biosynthesis of the indole diterpenes nodulisporic acids (NA). Nodulisporic acid A (NAA) and its chemically modified derivatives are of particular significance because of their highly potent insecticidal activity against blood-feeding arthropods and lack of observable adverse effects on mammals, in particular the tremogenicity associated with the paspaline-derived IDTs is not observed. The geranylgeranyl diphosphate (GGPP) synthase ggs1, localized outside of the cluster, is proposed to catalyze the first step in nodulisporic acid biosynthesis via conversion of farnesyl pyrophosphate and isopentyl pyrophosphate into geranylgeranyl pyrophosphate (GGPP). Condensation of indole-3-glycerol phosphate with GGPP by the prenyl transferase nodC then forms 3-geranylgeranylindole (3-GGI). Epoxidation by the FAD-dependent monooxygenase nodM leads to a single-epoxidized-GGI that is substrate of the terpene cyclase nodB for cyclization to yield emindole SB. The terminal methyl carbon, C28, of emindole SB is then oxidized by the cytochrome P450 monooxygenase nodW to produce nodulisporic acid F (NAF), the pentacyclic core of NAA. NAF is converted to nodulisporic acid E (NAE) via prenylation. This step is probably performed by one of the indole diterpene prenyltransferases nodD1 or nodD2. Several oxidation steps performed by the FAD-linked oxidoreductase nodO and one of the cytochrome P450 monooxygenase nodR, nodX or nodZ further convert NAE to nodulisporic acid D (NAD). NAD is substrate of cytochrome P450 monooxygenase nodJ to produce the precursor of nodulisporic acid C (NAC), converted to NAC by one of the indole diterpene prenyltransferases nodD1 or nodD2. The FAD-dependent monooxygenase nodY2 then oxidizes NAC to nodulisporic acid B (NAB). Finally NAB is converted to NAA by one of the cytochrome P450 monooxygenases nodR, nodX or nodZ. This chain is FAD-dependent monooxygenase nodY1, found in Hypoxylon pulicicidum.